We begin with the raw amino-acid sequence, 155 residues long: SsrA-binding protein (155 aa).

It belongs to the SmpB family.

It localises to the cytoplasm. Functionally, required for rescue of stalled ribosomes mediated by trans-translation. Binds to transfer-messenger RNA (tmRNA), required for stable association of tmRNA with ribosomes. tmRNA and SmpB together mimic tRNA shape, replacing the anticodon stem-loop with SmpB. tmRNA is encoded by the ssrA gene; the 2 termini fold to resemble tRNA(Ala) and it encodes a 'tag peptide', a short internal open reading frame. During trans-translation Ala-aminoacylated tmRNA acts like a tRNA, entering the A-site of stalled ribosomes, displacing the stalled mRNA. The ribosome then switches to translate the ORF on the tmRNA; the nascent peptide is terminated with the 'tag peptide' encoded by the tmRNA and targeted for degradation. The ribosome is freed to recommence translation, which seems to be the essential function of trans-translation. The polypeptide is SsrA-binding protein (Moorella thermoacetica (strain ATCC 39073 / JCM 9320)).